The primary structure comprises 90 residues: Protein PRAC2 (90 aa).

As to expression, highly expressed in prostate and testis. Also detected in placenta, muscle, colon, peripheral blood leukocytes and skin.

The protein resides in the nucleus. This chain is Protein PRAC2, found in Homo sapiens (Human).